Reading from the N-terminus, the 1017-residue chain is Type VI secretion system spike protein VgrG3 (1017 aa).

The active site involves Asp842.

This sequence belongs to the VgrG protein family. In terms of assembly, interacts with TsiV3. Interacts with TseL.

It is found in the secreted. In terms of biological role, part of the type VI secretion system specialized secretion system, which delivers several virulence factors in both prokaryotic and eukaryotic cells during infection. Forms the spike at the tip of the elongating tube formed by haemolysin co-regulated protein Hcp. Allows the delivery of the TseL antibacterial toxin to target cells where it exerts its toxicity. Additionally, acts directly as an effector and targets the cell wall peptidoglycan layer of prey cells for degradation via its C-terminus. Toxicity is counteracted by a cognate immunity protein TsiV3. The polypeptide is Type VI secretion system spike protein VgrG3 (Vibrio cholerae serotype O1 (strain ATCC 39315 / El Tor Inaba N16961)).